The chain runs to 204 residues: Lysozyme g (204 aa).

The N-terminal stretch at 1 to 19 (MHLMLVLLGLAALLGTSQS) is a signal peptide. Disulfide bonds link Cys23–Cys79 and Cys37–Cys48. Active-site residues include Glu92 and Asp105.

Belongs to the glycosyl hydrolase 23 family.

Its subcellular location is the secreted. The enzyme catalyses Hydrolysis of (1-&gt;4)-beta-linkages between N-acetylmuramic acid and N-acetyl-D-glucosamine residues in a peptidoglycan and between N-acetyl-D-glucosamine residues in chitodextrins.. Functionally, has bacteriolytic activity against M.luteus. This is Lysozyme g from Struthio camelus (Common ostrich).